The primary structure comprises 525 residues: Delta(24)-sterol reductase homolog dhcr-24 (525 aa).

Transmembrane regions (helical) follow at residues 27–47 and 214–234; these read WVFVVPFLLPLSFLFNTVFDF and SLFFAIPWSQGTICFLVAATI. In terms of domain architecture, FAD-binding PCMH-type spans 47 to 239; that stretch reads FRNRIVHAVN…VAATIKIIPC (193 aa).

This sequence belongs to the FAD-binding oxidoreductase/transferase type 4 family. The cofactor is FAD.

The protein resides in the endoplasmic reticulum membrane. It localises to the golgi apparatus membrane. The enzyme catalyses cholesterol + NADP(+) = desmosterol + NADPH + H(+). The catalysed reaction is lanosterol + NADPH + H(+) = 24,25-dihydrolanosterol + NADP(+). It catalyses the reaction 5alpha-cholest-8-en-3beta-ol + NADP(+) = zymosterol + NADPH + H(+). Its pathway is steroid biosynthesis; cholesterol biosynthesis. Catalyzes the reduction of the delta-24 double bond of sterol intermediates during cholesterol biosynthesis. This chain is Delta(24)-sterol reductase homolog dhcr-24, found in Caenorhabditis elegans.